We begin with the raw amino-acid sequence, 177 residues long: Trafficking regulator of GLUT4 1 (177 aa).

Residues 1 to 105 are Cytoplasmic-facing; sequence MAHPVQSEFP…QDQEAPRDYL (105 aa). A phosphoserine mark is found at Ser-48, Ser-87, and Ser-88. The segment at 71-92 is disordered; the sequence is EAPLPRSPSRASSRRASSIATT. The span at 72 to 88 shows a compositional bias: low complexity; the sequence is APLPRSPSRASSRRASS. The helical intramembrane region spans 106-126; it reads ILAVVACFCPVWPLNLIPLII. Topologically, residues 127–153 are cytoplasmic; the sequence is SIMSRSSMQQGNVDGARRLGRLARLLS. The chain crosses the membrane as a helical span at residues 154 to 174; sequence ITLIIMGIVIIMVAVTVNFTV. Topologically, residues 175–177 are extracellular; it reads QKK.

The protein belongs to the CD225/Dispanin family. As to quaternary structure, interacts with SLC2A4; the interaction is required for proper SLC2A4 reacycling after insulin stimulation. Expressed at high levels in heart, mammary gland, adrenal gland, stomach, smooth muscle and skeletal muscle, and at lower levels in brain and lung. Strongly down-regulated in lung cancer tissues, due to hypermethylation of the corresponding locus. Expressed in adipose tissue.

It is found in the cell membrane. It localises to the endomembrane system. The protein resides in the cytoplasm. The protein localises to the perinuclear region. Its function is as follows. Regulates insulin-mediated adipose tissue glucose uptake and transport by modulation of SLC2A4 recycling. Not required for SLC2A4 membrane fusion upon an initial stimulus, but rather is necessary for proper protein recycling during prolonged insulin stimulation. The sequence is that of Trafficking regulator of GLUT4 1 from Homo sapiens (Human).